A 96-amino-acid chain; its full sequence is Co-chaperonin GroES (96 aa).

This sequence belongs to the GroES chaperonin family. Heptamer of 7 subunits arranged in a ring. Interacts with the chaperonin GroEL.

Its subcellular location is the cytoplasm. In terms of biological role, together with the chaperonin GroEL, plays an essential role in assisting protein folding. The GroEL-GroES system forms a nano-cage that allows encapsulation of the non-native substrate proteins and provides a physical environment optimized to promote and accelerate protein folding. GroES binds to the apical surface of the GroEL ring, thereby capping the opening of the GroEL channel. The protein is Co-chaperonin GroES of Wolbachia pipientis wMel.